A 214-amino-acid chain; its full sequence is Phosphatidylcholine transfer protein (214 aa).

At Met1 the chain carries N-acetylmethionine. In terms of domain architecture, START spans 1-212 (MAGPAAHFSD…MVKACQNYHK (212 aa)). Residues Tyr72 and Arg78 each contribute to the a 1,2-diacyl-sn-glycero-3-phosphocholine site. Ser139 bears the Phosphoserine mark. Residue Gln157 participates in a 1,2-diacyl-sn-glycero-3-phosphocholine binding.

As to quaternary structure, interacts with ACOT13/THEM2.

It localises to the cytoplasm. Its function is as follows. Lipid transfer protein that promotes intermembrane transfer of phosphatidylcholines but no other phospholipids. Binds a single lipid molecule. May play a role in hepatocellular selection and transport of phosphatidylcholines during bile formation. This chain is Phosphatidylcholine transfer protein (Pctp), found in Rattus norvegicus (Rat).